Here is a 510-residue protein sequence, read N- to C-terminus: Probable lysine--tRNA ligase, cytoplasmic (510 aa).

This sequence belongs to the class-II aminoacyl-tRNA synthetase family. Homodimer.

Its subcellular location is the cytoplasm. It catalyses the reaction tRNA(Lys) + L-lysine + ATP = L-lysyl-tRNA(Lys) + AMP + diphosphate. The sequence is that of Probable lysine--tRNA ligase, cytoplasmic from Encephalitozoon cuniculi (strain GB-M1) (Microsporidian parasite).